Reading from the N-terminus, the 1460-residue chain is CLIP-associating protein 1-A (1460 aa).

HEAT repeat units follow at residues 87 to 124 and 163 to 200; these read TQLG…QASN and LTLS…HVGE. Residues 237–293 are disordered; the sequence is SDKNFDDEDSVDGNRPSSASSSASSKAPQTARRGVSLGTARRPGPSSAAAKTGGTAK. Residues 279–293 are compositionally biased toward low complexity; the sequence is PGPSSAAAKTGGTAK. 2 HEAT repeats span residues 407-442 and 443-479; these read HGAE…IRHT and HVPR…EWQT. 3 disordered regions span residues 545–605, 640–733, and 778–800; these read SDSI…IDVN, IRTR…RFGI, and PYGM…ERSY. The segment covering 550-569 has biased composition (low complexity); sequence SLPQSDRSSSSSQESLNRPL. A compositionally biased stretch (polar residues) spans 571–597; that stretch reads TKRSPTGSTVSRASSTTSKSTPGSLQR. The segment covering 645 to 659 has biased composition (low complexity); sequence QSSGSTTSTASTPAD. Polar residues-rich tracts occupy residues 669-681 and 715-724; these read VSQS…SNSP and QGCSRETSPS. Residues 789–800 show a composition bias toward low complexity; that stretch reads SDASSACSERSY. Residues 942–979 form an HEAT 5 repeat; sequence FIVDQTQTPNLKVKVAILKYIESLARQMDPTDFVNSSE. The interval 1041–1084 is disordered; the sequence is LKNSSNSSMGSPSNTIGRTPSRHSSSRASPLTSPTNCSHGGLSP. Positions 1042-1054 are enriched in low complexity; the sequence is KNSSNSSMGSPSN. The span at 1066-1078 shows a compositional bias: polar residues; sequence SRASPLTSPTNCS. HEAT repeat units follow at residues 1272–1309 and 1390–1427; these read LLLE…YAEL and GLLQ…YLAQ.

It belongs to the CLASP family.

Its subcellular location is the cytoplasm. The protein resides in the cytoskeleton. It is found in the microtubule organizing center. The protein localises to the centrosome. It localises to the chromosome. Its subcellular location is the centromere. The protein resides in the kinetochore. It is found in the spindle. The protein localises to the golgi apparatus. It localises to the trans-Golgi network. Microtubule plus-end tracking protein that promotes the stabilization of dynamic microtubules during anaphase. Plays a crucial role in chromatin-induced microtubule formation. May also act at microtubule minus ends. May be involved in the nucleation of noncentrosomal microtubules originating from the trans-Golgi network (TGN). The sequence is that of CLIP-associating protein 1-A (clasp1-a) from Xenopus laevis (African clawed frog).